The following is a 2020-amino-acid chain: Metacaspase-2 (2020 aa).

Basic and acidic residues-rich tracts occupy residues Ser-51–Gln-60 and Asp-69–Lys-78. Disordered regions lie at residues Ser-51–Lys-78 and Arg-573–Asn-614. The segment covering Asn-576–Asn-614 has biased composition (low complexity).

This sequence belongs to the peptidase C14B family.

The protein localises to the cytoplasm. With respect to regulation, ca(2+) does not appear to affect catalytic activity. Its function is as follows. Protease that cleaves specifically after arginine or lysine residues. May play a role in parasite growth and/or development. This Plasmodium falciparum (isolate 3D7) protein is Metacaspase-2.